The chain runs to 465 residues: Cysteine--tRNA ligase 2 (465 aa).

Residue C30 participates in Zn(2+) binding. The 'HIGH' region motif lies at 32-42 (ITVYDYCHVGH). The Zn(2+) site is built by C214, H239, and E243. A 'KMSKS' region motif is present at residues 271–275 (KMSKS). K274 contacts ATP.

Belongs to the class-I aminoacyl-tRNA synthetase family. In terms of assembly, monomer. Zn(2+) serves as cofactor.

The protein localises to the cytoplasm. It carries out the reaction tRNA(Cys) + L-cysteine + ATP = L-cysteinyl-tRNA(Cys) + AMP + diphosphate. The polypeptide is Cysteine--tRNA ligase 2 (Burkholderia lata (strain ATCC 17760 / DSM 23089 / LMG 22485 / NCIMB 9086 / R18194 / 383)).